Here is a 115-residue protein sequence, read N- to C-terminus: Nitrogenase-stabilizing/protective protein NifW (115 aa).

This sequence belongs to the NifW family. As to quaternary structure, homotrimer; associates with NifD.

Its function is as follows. May protect the nitrogenase Fe-Mo protein from oxidative damage. This Rhodopseudomonas palustris (strain BisB18) protein is Nitrogenase-stabilizing/protective protein NifW.